The following is a 141-amino-acid chain: Putative pre-16S rRNA nuclease (141 aa).

Belongs to the YqgF nuclease family.

It localises to the cytoplasm. Could be a nuclease involved in processing of the 5'-end of pre-16S rRNA. The protein is Putative pre-16S rRNA nuclease of Dictyoglomus turgidum (strain DSM 6724 / Z-1310).